A 311-amino-acid chain; its full sequence is Methionyl-tRNA formyltransferase (311 aa).

112-115 (SLLP) contacts (6S)-5,6,7,8-tetrahydrofolate.

Belongs to the Fmt family.

The enzyme catalyses L-methionyl-tRNA(fMet) + (6R)-10-formyltetrahydrofolate = N-formyl-L-methionyl-tRNA(fMet) + (6S)-5,6,7,8-tetrahydrofolate + H(+). Its function is as follows. Attaches a formyl group to the free amino group of methionyl-tRNA(fMet). The formyl group appears to play a dual role in the initiator identity of N-formylmethionyl-tRNA by promoting its recognition by IF2 and preventing the misappropriation of this tRNA by the elongation apparatus. In Agrobacterium fabrum (strain C58 / ATCC 33970) (Agrobacterium tumefaciens (strain C58)), this protein is Methionyl-tRNA formyltransferase.